The chain runs to 261 residues: Non-structural protein 2a (261 aa).

It belongs to the coronaviruses ns2a protein family.

The protein localises to the host cytoplasm. In terms of biological role, not essential for virus replication in transformed murine cells. This Mus musculus (Mouse) protein is Non-structural protein 2a.